The sequence spans 199 residues: Chromophore lyase CpcT/CpeT 2 (199 aa).

This sequence belongs to the CpcT/CpeT biliprotein lyase family.

Covalently attaches a chromophore to Cys residue(s) of phycobiliproteins. The polypeptide is Chromophore lyase CpcT/CpeT 2 (Synechococcus sp. (strain JA-3-3Ab) (Cyanobacteria bacterium Yellowstone A-Prime)).